A 391-amino-acid polypeptide reads, in one-letter code: tRNA-specific 2-thiouridylase MnmA (391 aa).

Residues 9–16 (GMSGGVDS) and Met35 contribute to the ATP site. Residues 95-97 (NPD) are interaction with target base in tRNA. The active-site Nucleophile is the Cys100. A disulfide bridge connects residues Cys100 and Cys196. Gly124 provides a ligand contact to ATP. The interaction with tRNA stretch occupies residues 146-148 (KDQ). The active-site Cysteine persulfide intermediate is the Cys196. Residues 308–309 (RY) form an interaction with tRNA region. Residues 372–382 (TGQPGQATSTG) are compositionally biased toward polar residues. Residues 372–391 (TGQPGQATSTGHAPALAEAR) are disordered.

The protein belongs to the MnmA/TRMU family.

It localises to the cytoplasm. It carries out the reaction S-sulfanyl-L-cysteinyl-[protein] + uridine(34) in tRNA + AH2 + ATP = 2-thiouridine(34) in tRNA + L-cysteinyl-[protein] + A + AMP + diphosphate + H(+). In terms of biological role, catalyzes the 2-thiolation of uridine at the wobble position (U34) of tRNA, leading to the formation of s(2)U34. This is tRNA-specific 2-thiouridylase MnmA from Burkholderia cenocepacia (strain ATCC BAA-245 / DSM 16553 / LMG 16656 / NCTC 13227 / J2315 / CF5610) (Burkholderia cepacia (strain J2315)).